Reading from the N-terminus, the 393-residue chain is Phosphoglycerate kinase (393 aa).

Residues D21–N23, R36, H59–R62, R114, and R147 each bind substrate. ATP is bound by residues K197, E319, and G349 to T352.

Belongs to the phosphoglycerate kinase family. As to quaternary structure, monomer.

It is found in the cytoplasm. It carries out the reaction (2R)-3-phosphoglycerate + ATP = (2R)-3-phospho-glyceroyl phosphate + ADP. It participates in carbohydrate degradation; glycolysis; pyruvate from D-glyceraldehyde 3-phosphate: step 2/5. The polypeptide is Phosphoglycerate kinase (Dinoroseobacter shibae (strain DSM 16493 / NCIMB 14021 / DFL 12)).